The chain runs to 235 residues: Ubiquinone/menaquinone biosynthesis C-methyltransferase UbiE (235 aa).

Positions 60 and 81 each coordinate S-adenosyl-L-methionine.

This sequence belongs to the class I-like SAM-binding methyltransferase superfamily. MenG/UbiE family.

It catalyses the reaction a 2-demethylmenaquinol + S-adenosyl-L-methionine = a menaquinol + S-adenosyl-L-homocysteine + H(+). It carries out the reaction a 2-methoxy-6-(all-trans-polyprenyl)benzene-1,4-diol + S-adenosyl-L-methionine = a 5-methoxy-2-methyl-3-(all-trans-polyprenyl)benzene-1,4-diol + S-adenosyl-L-homocysteine + H(+). Its pathway is quinol/quinone metabolism; menaquinone biosynthesis; menaquinol from 1,4-dihydroxy-2-naphthoate: step 2/2. It functions in the pathway cofactor biosynthesis; ubiquinone biosynthesis. In terms of biological role, methyltransferase required for the conversion of demethylmenaquinol (DMKH2) to menaquinol (MKH2) and the conversion of 2-polyprenyl-6-methoxy-1,4-benzoquinol (DDMQH2) to 2-polyprenyl-3-methyl-6-methoxy-1,4-benzoquinol (DMQH2). The chain is Ubiquinone/menaquinone biosynthesis C-methyltransferase UbiE from Geotalea uraniireducens (strain Rf4) (Geobacter uraniireducens).